Consider the following 675-residue polypeptide: DNA ligase (675 aa).

NAD(+) contacts are provided by residues 32 to 36 (DAEYD), 81 to 82 (SL), and Glu-113. Lys-115 serves as the catalytic N6-AMP-lysine intermediate. NAD(+) contacts are provided by Arg-136, Glu-173, Lys-291, and Lys-315. Zn(2+) contacts are provided by Cys-409, Cys-412, Cys-427, and Cys-433. The BRCT domain occupies 595 to 675 (SEKTYFFNKK…ELNSLIRIKE (81 aa)).

This sequence belongs to the NAD-dependent DNA ligase family. LigA subfamily. Requires Mg(2+) as cofactor. It depends on Mn(2+) as a cofactor.

It catalyses the reaction NAD(+) + (deoxyribonucleotide)n-3'-hydroxyl + 5'-phospho-(deoxyribonucleotide)m = (deoxyribonucleotide)n+m + AMP + beta-nicotinamide D-nucleotide.. In terms of biological role, DNA ligase that catalyzes the formation of phosphodiester linkages between 5'-phosphoryl and 3'-hydroxyl groups in double-stranded DNA using NAD as a coenzyme and as the energy source for the reaction. It is essential for DNA replication and repair of damaged DNA. This chain is DNA ligase, found in Buchnera aphidicola subsp. Acyrthosiphon pisum (strain APS) (Acyrthosiphon pisum symbiotic bacterium).